A 218-amino-acid polypeptide reads, in one-letter code: Small ribosomal subunit protein uS3c (218 aa).

In terms of domain architecture, KH type-2 spans 43-118 (IKNYVQKNTR…KLNIAITRIG (76 aa)).

This sequence belongs to the universal ribosomal protein uS3 family. Part of the 30S ribosomal subunit.

The protein resides in the plastid. It localises to the chloroplast. This is Small ribosomal subunit protein uS3c (rps3) from Gossypium barbadense (Sea Island cotton).